Consider the following 115-residue polypeptide: MSNIIKQLEQEQMKQNVPSFRPGDTVEVKVWVVEGTKKRLQAFEGVVIAIRNRGLHSAFTVRKISNGEGVERVFQTHSPVVDSIAVKRRGAVRKAKLYYLRERTGKAARIKERLN.

It belongs to the bacterial ribosomal protein bL19 family.

Functionally, this protein is located at the 30S-50S ribosomal subunit interface and may play a role in the structure and function of the aminoacyl-tRNA binding site. The chain is Large ribosomal subunit protein bL19 from Salmonella choleraesuis (strain SC-B67).